We begin with the raw amino-acid sequence, 126 residues long: Profilin-1B (126 aa).

The tract at residues 2–36 (SWQTYVDTNLVGTGAVTQAAILGLDGNTWATSAGF) is actin binding. N6,N6,N6-trimethyllysine is present on Lys104.

Belongs to the profilin family. As to quaternary structure, occurs in many kinds of cells as a complex with monomeric actin in a 1:1 ratio.

It is found in the cytoplasm. The protein localises to the cytoskeleton. Its function is as follows. Binds to actin and affects the structure of the cytoskeleton. At high concentrations, profilin prevents the polymerization of actin, whereas it enhances it at low concentrations. By binding to PIP2, it inhibits the formation of IP3 and DG. In Acanthamoeba castellanii (Amoeba), this protein is Profilin-1B.